A 440-amino-acid polypeptide reads, in one-letter code: Chromosome partition protein MukF (440 aa).

The interval 208 to 236 (LSETSGTLRELQDTLEAAGDKLQANLLRI) is leucine-zipper.

Belongs to the MukF family. As to quaternary structure, interacts, and probably forms a ternary complex, with MukE and MukB via its C-terminal region. The complex formation is stimulated by calcium or magnesium. It is required for an interaction between MukE and MukB.

The protein localises to the cytoplasm. Its subcellular location is the nucleoid. In terms of biological role, involved in chromosome condensation, segregation and cell cycle progression. May participate in facilitating chromosome segregation by condensation DNA from both sides of a centrally located replisome during cell division. Not required for mini-F plasmid partitioning. Probably acts via its interaction with MukB and MukE. Overexpression results in anucleate cells. It has a calcium binding activity. The protein is Chromosome partition protein MukF of Salmonella gallinarum (strain 287/91 / NCTC 13346).